We begin with the raw amino-acid sequence, 528 residues long: Proteinaceous RNase P 2 (528 aa).

The span at 1–16 (MAASDQHRSRRHDESS) shows a compositional bias: basic and acidic residues. The disordered stretch occupies residues 1-28 (MAASDQHRSRRHDESSSRPNKKKKVSRN). PPR repeat units follow at residues 29 to 64 (PETN…EVRL), 72 to 107 (LLYL…GISP), 108 to 142 (NEAS…GGVS), and 145 to 179 (RLRT…GIAL). Residues 275–511 (VSSTGRCLSC…NEESSRTWMC (237 aa)) enclose the PRORP domain. Zn(2+) is bound by residues Cys281 and Cys284. The Mg(2+) site is built by Asp343, Asp421, Asp422, and Asp440. Residues His494 and Cys511 each contribute to the Zn(2+) site.

This sequence belongs to the PPR family. P subfamily. As to quaternary structure, monomer; forms dimers in crystallo but monomers in solution. Mg(2+) is required as a cofactor.

It localises to the nucleus. The catalysed reaction is Endonucleolytic cleavage of RNA, removing 5'-extranucleotides from tRNA precursor.. Functionally, endonuclease RNase P responsible for the 5' maturation of tRNA precursors. Preferentially binds precursor tRNAs containing short 5' leaders and 3' trailers. Also involved in the maturation of mRNA and small nucleolar RNA (snoRNA). The sequence is that of Proteinaceous RNase P 2 (PRORP2) from Arabidopsis thaliana (Mouse-ear cress).